Reading from the N-terminus, the 370-residue chain is MPLSKNVIEKISIETIRVLKSRFDTISDEDIKIRNMPFHMAFLRAFYGKIGINDDTEALKFLTLSQWFHGLSTTLGQSYFENIAHILSNGEKRTFKNYKIKRSVRDKISEIINDLKSGERLPNVEKENKELREATSKNSEYVNGLEFTADVYFEDKDKVVMIELKTVRPNAGEMRGEKQKILYGKAYMMETKPNKKVYYFIGFPYDPTENPENPCGYDKDRFMSSLIEFSKYFDKREVLIAEELWSFLSGEENTMKKILDIINSIAKPDFKEKFDFINTFPFINQDRLYTKDAIDEQKFKKYMDILQEWRLYSEIECAKAVKELSLLKLSSRDRRTFERLINNSMFSNNNKYNENRKMKILELYNKYMQK.

Belongs to the TdeIII type II restriction endonuclease family.

The enzyme catalyses Endonucleolytic cleavage of DNA to give specific double-stranded fragments with terminal 5'-phosphates.. Its function is as follows. A P subtype restriction enzyme that recognizes the double-stranded sequence 5'-GGNCC-3'; the cleavage site is unknown. This is Type II restriction enzyme MjaII (mjaIIR) from Methanocaldococcus jannaschii (strain ATCC 43067 / DSM 2661 / JAL-1 / JCM 10045 / NBRC 100440) (Methanococcus jannaschii).